The sequence spans 193 residues: NADH-quinone oxidoreductase subunit B (193 aa).

Residues C49, C50, C115, and C144 each contribute to the [4Fe-4S] cluster site. Residues F172–E193 are disordered.

It belongs to the complex I 20 kDa subunit family. NDH-1 is composed of 14 different subunits. Subunits NuoB, C, D, E, F, and G constitute the peripheral sector of the complex. It depends on [4Fe-4S] cluster as a cofactor.

It is found in the cell inner membrane. The catalysed reaction is a quinone + NADH + 5 H(+)(in) = a quinol + NAD(+) + 4 H(+)(out). Its function is as follows. NDH-1 shuttles electrons from NADH, via FMN and iron-sulfur (Fe-S) centers, to quinones in the respiratory chain. The immediate electron acceptor for the enzyme in this species is believed to be ubiquinone. Couples the redox reaction to proton translocation (for every two electrons transferred, four hydrogen ions are translocated across the cytoplasmic membrane), and thus conserves the redox energy in a proton gradient. This chain is NADH-quinone oxidoreductase subunit B, found in Akkermansia muciniphila (strain ATCC BAA-835 / DSM 22959 / JCM 33894 / BCRC 81048 / CCUG 64013 / CIP 107961 / Muc).